The sequence spans 128 residues: Large ribosomal subunit protein bL12 (128 aa).

This sequence belongs to the bacterial ribosomal protein bL12 family. Homodimer. Part of the ribosomal stalk of the 50S ribosomal subunit. Forms a multimeric L10(L12)X complex, where L10 forms an elongated spine to which 2 to 4 L12 dimers bind in a sequential fashion. Binds GTP-bound translation factors.

In terms of biological role, forms part of the ribosomal stalk which helps the ribosome interact with GTP-bound translation factors. Is thus essential for accurate translation. The polypeptide is Large ribosomal subunit protein bL12 (Corynebacterium kroppenstedtii (strain DSM 44385 / JCM 11950 / CIP 105744 / CCUG 35717)).